A 680-amino-acid chain; its full sequence is Methionine--tRNA ligase (680 aa).

Positions 15–25 (PYANGSIHLGH) match the 'HIGH' region motif. Cys-146, Cys-149, Cys-159, and Cys-162 together coordinate Zn(2+). Positions 332 to 336 (KMSKS) match the 'KMSKS' region motif. Residue Lys-335 participates in ATP binding. Residues 579–680 (DFAKVDMRIA…EGAQPGMRVM (102 aa)) form the tRNA-binding domain.

The protein belongs to the class-I aminoacyl-tRNA synthetase family. MetG type 1 subfamily. Homodimer. The cofactor is Zn(2+).

Its subcellular location is the cytoplasm. It catalyses the reaction tRNA(Met) + L-methionine + ATP = L-methionyl-tRNA(Met) + AMP + diphosphate. Is required not only for elongation of protein synthesis but also for the initiation of all mRNA translation through initiator tRNA(fMet) aminoacylation. This Photobacterium profundum (strain SS9) protein is Methionine--tRNA ligase.